The sequence spans 137 residues: Hemoglobin subunit beta (137 aa).

A Globin domain is found at His-3–His-137. Heme b is bound by residues His-54 and His-83.

Belongs to the globin family. In terms of assembly, heterotetramer of two alpha chains and two beta chains. As to expression, red blood cells.

In terms of biological role, involved in oxygen transport from gills to the various peripheral tissues. In Mustelus griseus (Spotless smooth-hound), this protein is Hemoglobin subunit beta (HBB).